A 116-amino-acid polypeptide reads, in one-letter code: uncharacterized protein (116 aa).

Residues 20–42 (YLNKYYSVITYFLAFLTKFAILL) form a helical membrane-spanning segment. The tract at residues 95–116 (IEFQSKSSPVPPASESNKGINE) is disordered.

The protein resides in the membrane. This is an uncharacterized protein from Saccharomyces cerevisiae (strain ATCC 204508 / S288c) (Baker's yeast).